Here is a 633-residue protein sequence, read N- to C-terminus: Acetylcholinesterase (633 aa).

The N-terminal stretch at M1–A23 is a signal peptide. Residues C91 and C118 are joined by a disulfide bond. N-linked (GlcNAc...) asparagine glycosylation is found at N133 and N184. S225 serves as the catalytic Acyl-ester intermediate. C279 and C290 are joined by a disulfide. N283 carries an N-linked (GlcNAc...) asparagine glycan. The Charge relay system role is filled by E352. Residue N368 is glycosylated (N-linked (GlcNAc...) asparagine). A disulfide bridge links C427 with C579. Catalysis depends on H494, which acts as the Charge relay system. N511 and N591 each carry an N-linked (GlcNAc...) asparagine glycan.

It belongs to the type-B carboxylesterase/lipase family.

It localises to the synapse. It is found in the secreted. The protein resides in the cell membrane. The catalysed reaction is acetylcholine + H2O = choline + acetate + H(+). Its function is as follows. Terminates signal transduction at the neuromuscular junction by rapid hydrolysis of the acetylcholine released into the synaptic cleft. This chain is Acetylcholinesterase (ache), found in Electrophorus electricus (Electric eel).